The following is a 1197-amino-acid chain: Neural cell adhesion molecule L1.1 (1197 aa).

5 Ig-like C2-type domains span residues 1–58, 69–160, 165–263, 268–355, and 360–442; these read EFRQ…TAVS, PSLA…EPMS, PSNS…YTVT, PYWT…THVH, and PAQI…KSIS. At 1–1054 the chain is on the extracellular side; it reads EFRQRDPSPS…SPRNFATEGW (1054 aa). Cys-92 and Cys-143 form a disulfide bridge. 8 N-linked (GlcNAc...) asparagine glycosylation sites follow: Asn-135, Asn-149, Asn-221, Asn-298, Asn-414, Asn-421, Asn-438, and Asn-449. Disulfide bonds link Cys-199-Cys-247, Cys-289-Cys-339, and Cys-383-Cys-432. The 91-residue stretch at 451–541 folds into the Ig-like C2-type 6 domain; that stretch reads TKIVGPPQNL…DSDTASGYIT (91 aa). Cys-472 and Cys-525 are disulfide-bonded. Fibronectin type-III domains lie at 548 to 643, 645 to 742, 747 to 852, 853 to 952, and 953 to 1048; these read PPQS…TPAA, PDTN…SGED, APSA…TPEG, APGP…LLDG, and EPPS…SPRN. The span at 630–640 shows a compositional bias: polar residues; the sequence is APTESSLSYST. Positions 630–655 are disordered; that stretch reads APTESSLSYSTPAAKPDTNPENVMTL. The N-linked (GlcNAc...) asparagine glycan is linked to Asn-708. 4 N-linked (GlcNAc...) asparagine glycosylation sites follow: Asn-959, Asn-968, Asn-1002, and Asn-1027. Residues 1055 to 1075 form a helical membrane-spanning segment; sequence FIGLISALVLLLLVLLLLCYI. Residues 1076 to 1197 are Cytoplasmic-facing; sequence KKSKGGKYSV…TSVTGILGPN (122 aa). 2 disordered regions span residues 1115 to 1135 and 1154 to 1197; these read MEKCSISQPSGCESKRSSNDS and IGQY…LGPN.

It belongs to the immunoglobulin superfamily. L1/neurofascin/NgCAM family. Expressed in postmitotic neurons in 16-36 hours embryos, including those in the brain, cranial ganglia and otic and olfactory placodes, and in all classes of spinal neurons.

The protein resides in the cell membrane. The protein localises to the cell projection. It is found in the growth cone. Its function is as follows. Cell adhesion molecule with an important role in the development of the nervous system. Involved in neuron-neuron adhesion, neurite fasciculation, outgrowth of neurites, etc. Binds to axonin on neurons. The polypeptide is Neural cell adhesion molecule L1.1 (nadl1.1) (Danio rerio (Zebrafish)).